A 760-amino-acid polypeptide reads, in one-letter code: Anti-sigma-I factor RsgI6 (760 aa).

Over 1–55 (MIVGKVLDMDEKTAIIMTDDFAFLNVVRTSEMAVGKKVKVLDSDIIKPKNSLRRY) the chain is Cytoplasmic. Residues 2–49 (IVGKVLDMDEKTAIIMTDDFAFLNVVRTSEMAVGKKVKVLDSDIIKPK) form the RsgI N-terminal anti-sigma domain. A helical membrane pass occupies residues 56-76 (LPVAAVAACFVIVLSFVLMFI). Over 77–760 (NGNTARKNIY…GTLQTTYRIP (684 aa)) the chain is Extracellular. A disordered region spans residues 274–352 (AINTGPAESA…STPKPVSPVQ (79 aa)). Residues 291 to 352 (LPATSTPGRT…STPKPVSPVQ (62 aa)) are compositionally biased toward polar residues. Positions 402-701 (DSSNKPIENA…NEAGRRFESL (300 aa)) constitute a GH10 domain. Residue Glu-538 is the Proton donor of the active site. Glu-635 serves as the catalytic Nucleophile.

In the C-terminal section; belongs to the glycosyl hydrolase 10 (cellulase F) family. In terms of assembly, interacts (via RsgI N-terminal anti-sigma domain) with SigI6.

The protein localises to the cell membrane. The enzyme catalyses Endohydrolysis of (1-&gt;4)-beta-D-xylosidic linkages in xylans.. The protein operates within glycan degradation; xylan degradation. Its function is as follows. Anti-sigma factor for SigI6. Negatively regulates SigI6 activity through direct interaction. Binding of the polysaccharide substrate to the extracellular C-terminal sensing domain of RsgI6 may induce a conformational change in its N-terminal cytoplasmic region, leading to the release and activation of SigI6. Binds to and hydrolyzes insoluble and soluble xylan substrates. Has low enzymatic activity. The chain is Anti-sigma-I factor RsgI6 from Acetivibrio thermocellus (strain ATCC 27405 / DSM 1237 / JCM 9322 / NBRC 103400 / NCIMB 10682 / NRRL B-4536 / VPI 7372) (Clostridium thermocellum).